The chain runs to 1106 residues: Solute carrier family 12 member 7 (1106 aa).

Residues 1–143 lie on the Cytoplasmic side of the membrane; it reads MVYTALTWQR…PRESKAPCMG (143 aa). The disordered stretch occupies residues 17–83; it reads GLVPSHLPQE…SPFIGSAAAD (67 aa). A phosphoserine mark is found at serine 74 and serine 86. The discontinuously helical transmembrane segment at 144 to 166 threads the bilayer; it reads TFIGVYLPCLQNILGVILFLRLT. Asparagine 155 and isoleucine 156 together coordinate K(+). Position 159 (valine 159) interacts with chloride. Topologically, residues 167–173 are extracellular; sequence WIVGAAG. A helical membrane pass occupies residues 174 to 196; it reads VLESFLVVSMCCTCTMLTAVSMS. The Cytoplasmic portion of the chain corresponds to 197-220; the sequence is AIATNGVVPAGGSYYMISRSLGPE. The helical transmembrane segment at 221-249 threads the bilayer; the sequence is FGGAVGLCFYLGTTFAGAMYILGTIEIFL. The Extracellular segment spans residues 250–273; the sequence is TYISPGAAVFQAETPEGEAAALLH. Helical transmembrane passes span 274 to 295 and 296 to 324; these read NMRV…VGVK and YVNK…KTAF. Residues 325–443 lie on the Extracellular side of the membrane; it reads DPPDIPVCLL…PYVLSDITTY (119 aa). N-linked (GlcNAc...) asparagine glycosylation is found at asparagine 336, asparagine 355, and asparagine 384. Residues 444 to 464 form a helical membrane-spanning segment; that stretch reads FTVLVGIYFPSVTGIMAGSNR. The K(+) site is built by proline 453 and threonine 456. A chloride-binding site is contributed by proline 453. The chloride site is built by glycine 457 and isoleucine 458. Topologically, residues 465-474 are cytoplasmic; that stretch reads SGDLKDAQKS. The chain crosses the membrane as a helical span at residues 475-497; the sequence is IPTGTILAIVTTSFIYLSCIVLF. Residues 498–528 are Extracellular-facing; it reads GACIEGVVLRDKFGEALQGNLVIGMLAWPSP. A helical membrane pass occupies residues 529–555; it reads WVIVIGSFFSTCGAGLQSLTGAPRLLQ. The Cytoplasmic portion of the chain corresponds to 556-578; it reads AIARDGIVPFLQVFGHGKANGEP. 2 helical membrane-spanning segments follow: residues 579 to 597 and 598 to 622; these read TWAL…LIAS and LDSV…ACAV. Tyrosine 613 lines the chloride pocket. Residues 623–636 are Cytoplasmic-facing; that stretch reads QTLLRTPNWRPRFK. 2 helical membrane passes run 637 to 659 and 660 to 675; these read YYHW…ICSW and YYAL…IYKY. Residues 676-1106 lie on the Cytoplasmic side of the membrane; it reads IEYRGAEKEW…GGREVITIYS (431 aa). Positions 688-704 are scissor helix; it reads GIRGLSLNAARYALLRV. The interval 980-999 is disordered; that stretch reads RNTASHTAASRAQAPPTPDK. A phosphothreonine mark is found at threonine 996 and threonine 1003.

This sequence belongs to the SLC12A transporter family. K/Cl co-transporter subfamily. Homodimer; adopts a domain-swap conformation at the scissor helices connecting the transmembrane domain and C-terminal domain. Heterodimer with K-Cl cotransporter SLC12A5. In terms of tissue distribution, widely expressed. Higher levels in heart, kidney and lung (at protein level).

The protein resides in the cell membrane. The catalysed reaction is K(+)(in) + chloride(in) = K(+)(out) + chloride(out). With respect to regulation, activated by N-ethylmaleimide (NEM). Inhibited by furosemide, DIDS and bumetanide. The inhibition is much stronger in the presence of 50 mM K(+) in the uptake medium. Inhibited by DIOA. Inhibited by WNK3. Functionally, mediates electroneutral potassium-chloride cotransport when activated by cell swelling. May mediate K(+) uptake into Deiters' cells in the cochlea and contribute to K(+) recycling in the inner ear. Important for the survival of cochlear outer and inner hair cells and the maintenance of the organ of Corti. May be required for basolateral Cl(-) extrusion in the kidney and contribute to renal acidification. This chain is Solute carrier family 12 member 7, found in Oryctolagus cuniculus (Rabbit).